The sequence spans 382 residues: 2-epi-valiolone synthase (382 aa).

NAD(+) contacts are provided by residues 92–95, 124–128, 148–149, Lys161, Lys170, and 188–191; these read EKSK, GVVVD, TT, and HLRT. Residues Glu203, His266, and His283 each contribute to the Zn(2+) site.

This sequence belongs to the sugar phosphate cyclases superfamily. EVS family. It depends on NAD(+) as a cofactor. The cofactor is Co(2+). Zn(2+) is required as a cofactor.

It catalyses the reaction D-sedoheptulose 7-phosphate = 2-epi-valiolone + phosphate. Its function is as follows. Catalyzes the conversion of sedoheptulose 7-phosphate to 2-epi-valiolone, which may serve as an alternative precursor for aminocyclitol biosynthesis. This chain is 2-epi-valiolone synthase, found in Actinosynnema mirum (strain ATCC 29888 / DSM 43827 / JCM 3225 / NBRC 14064 / NCIMB 13271 / NRRL B-12336 / IMRU 3971 / 101).